The chain runs to 245 residues: Eukaryotic translation initiation factor 6 (245 aa).

Tyr113 carries the post-translational modification Phosphotyrosine. Thr165 carries the phosphothreonine modification. Phosphoserine is present on Ser166. Ser174 and Ser175 each carry phosphoserine; by CK1. A Phosphoserine; by PKC modification is found at Ser235. Phosphoserine occurs at positions 239 and 243.

Belongs to the eIF-6 family. Monomer. Associates with the 60S ribosomal subunit. Interacts with RACK1. Interacts with DICER1, AGO2, TARBP2, MOV10 and RPL7A; they form a large RNA-induced silencing complex (RISC). In terms of processing, phosphorylation at Ser-174 and Ser-175 by CSNK1D/CK1 promotes nuclear export. Ufmylated by UFL1. As to expression, expressed at very high levels in colon carcinoma with lower levels in normal colon and ileum and lowest levels in kidney and muscle (at protein level).

The protein resides in the cytoplasm. It localises to the nucleus. It is found in the nucleolus. In terms of biological role, binds to the 60S ribosomal subunit and prevents its association with the 40S ribosomal subunit to form the 80S initiation complex in the cytoplasm. Behaves as a stimulatory translation initiation factor downstream insulin/growth factors. Is also involved in ribosome biogenesis. Associates with pre-60S subunits in the nucleus and is involved in its nuclear export. Cytoplasmic release of TIF6 from 60S subunits and nuclear relocalization is promoted by a RACK1 (RACK1)-dependent protein kinase C activity. In tissues responsive to insulin, controls fatty acid synthesis and glycolysis by exerting translational control of adipogenic transcription factors such as CEBPB, CEBPD and ATF4 that have G/C rich or uORF in their 5'UTR. Required for ROS-dependent megakaryocyte maturation and platelets formation, controls the expression of mitochondrial respiratory chain genes involved in reactive oxygen species (ROS) synthesis. Involved in miRNA-mediated gene silencing by the RNA-induced silencing complex (RISC). Required for both miRNA-mediated translational repression and miRNA-mediated cleavage of complementary mRNAs by RISC. Modulates cell cycle progression and global translation of pre-B cells, its activation seems to be rate-limiting in tumorigenesis and tumor growth. The protein is Eukaryotic translation initiation factor 6 of Homo sapiens (Human).